A 519-amino-acid polypeptide reads, in one-letter code: VDHYTYCILGDGCQMEGVSNEACSIAAHWGLGKLIALYDDNHISIDGDTDIAFTEDVDKRFEALGWHVIWVKNGNNGYDKIRAAIKEAQAVKDKPTMIKITTTIGFGSPNKSNSYSVHGSALGAKEVEATRQNLGWPYEPFHVPDDVKKHWSRHTPQGASLESEWNAKFAEYEKKYPEEAAELKSIITGELPLGWEKALPTYTPENPGDATRNLSQQNLNALAKVLPGLLGGSADLASSNMTLLKSSGDFQKNTPEERNVRFGVREHGMGAICNGIALHSPGLIPYCATFFVFTDYMRAAMRISALCEARVIYVMTHDSIGLGEDGPTHQPIEHLASFRAMPNILMLRPADGNETAGAYKVAVQNLKRPSVLALSRQKLPQLPGTSIEGVEKGGYVISDNSSGNKPDVILIGTGSELEIAAKAGEVLRKEGKGVRVVSFVSWELFDEQSKEYKESVLPSSVTARVSIEAGSTFGWGKIVGSKGKAIGIDRFGASAPAGKIYEEFGITVEAVVAAAKELI.

Aspartate 11 is a binding site for Mg(2+). Residues glycine 12 and asparagine 41 each coordinate thiamine diphosphate. Mg(2+) is bound by residues asparagine 41 and isoleucine 43. Residue histidine 118 coordinates thiamine diphosphate. Substrate is bound by residues histidine 118, arginine 212, and serine 239. Positions 266 and 293 each coordinate thiamine diphosphate. Residue glutamate 266 is the Proton donor of the active site. Substrate is bound by residues histidine 317, aspartate 325, and arginine 376.

It belongs to the transketolase family. Homodimer. Mg(2+) serves as cofactor. It depends on Ca(2+) as a cofactor. Mn(2+) is required as a cofactor. Requires Co(2+) as cofactor. The cofactor is thiamine diphosphate. Constitutively expressed in leaves and roots.

The protein resides in the plastid. The protein localises to the chloroplast. It carries out the reaction D-sedoheptulose 7-phosphate + D-glyceraldehyde 3-phosphate = aldehydo-D-ribose 5-phosphate + D-xylulose 5-phosphate. Catalyzes the transfer of a two-carbon ketol group from a ketose donor to an aldose acceptor, via a covalent intermediate with the cofactor thiamine pyrophosphate. This Craterostigma plantagineum (Blue gem) protein is Transketolase, chloroplastic (TKT3).